Here is a 452-residue protein sequence, read N- to C-terminus: Biotin carboxylase (452 aa).

Residues 1-445 enclose the Biotin carboxylation domain; the sequence is MFKKVLIANR…TTAFVTNHLK (445 aa). ATP-binding positions include K116, K158, 164–165, 200–203, H208, and H235; these read GG and EKAV. Positions 120-317 constitute an ATP-grasp domain; the sequence is RTAMQTAGVP…LVEWQLLIAA (198 aa). K237 contacts hydrogencarbonate. ATP is bound by residues E275 and E288. Mg(2+)-binding residues include E275, E288, and N290. Positions 275, 288, and 290 each coordinate Mn(2+). R292, V295, and R338 together coordinate hydrogencarbonate. R292 is a catalytic residue. R338 serves as a coordination point for biotin.

As to quaternary structure, acetyl-CoA carboxylase is a heterohexamer of biotin carboxyl carrier protein, biotin carboxylase and the two subunits of carboxyl transferase in a 2:2 complex. It depends on Mg(2+) as a cofactor. The cofactor is Mn(2+).

The enzyme catalyses N(6)-biotinyl-L-lysyl-[protein] + hydrogencarbonate + ATP = N(6)-carboxybiotinyl-L-lysyl-[protein] + ADP + phosphate + H(+). It participates in lipid metabolism; malonyl-CoA biosynthesis; malonyl-CoA from acetyl-CoA: step 1/1. This protein is a component of the acetyl coenzyme A carboxylase complex; first, biotin carboxylase catalyzes the carboxylation of the carrier protein and then the transcarboxylase transfers the carboxyl group to form malonyl-CoA. This chain is Biotin carboxylase (accC), found in Halalkalibacterium halodurans (strain ATCC BAA-125 / DSM 18197 / FERM 7344 / JCM 9153 / C-125) (Bacillus halodurans).